Reading from the N-terminus, the 104-residue chain is L-rhamnose mutarotase (104 aa).

Tyrosine 18 contacts substrate. The active-site Proton donor is histidine 22. Substrate-binding positions include tyrosine 41 and 76–77; that span reads WW.

Belongs to the rhamnose mutarotase family. In terms of assembly, homodimer.

The protein localises to the cytoplasm. The enzyme catalyses alpha-L-rhamnose = beta-L-rhamnose. The protein operates within carbohydrate metabolism; L-rhamnose metabolism. Its function is as follows. Involved in the anomeric conversion of L-rhamnose. This is L-rhamnose mutarotase from Shouchella clausii (strain KSM-K16) (Alkalihalobacillus clausii).